Here is a 642-residue protein sequence, read N- to C-terminus: Threonine--tRNA ligase (642 aa).

One can recognise a TGS domain in the interval 1–61 (MPVITLPDGS…ETDAELSIIT (61 aa)). The segment at 243 to 534 (DHRKIGKQLD…LIEEYAGRFP (292 aa)) is catalytic. 3 residues coordinate Zn(2+): cysteine 334, histidine 385, and histidine 511.

The protein belongs to the class-II aminoacyl-tRNA synthetase family. In terms of assembly, homodimer. It depends on Zn(2+) as a cofactor.

It is found in the cytoplasm. The enzyme catalyses tRNA(Thr) + L-threonine + ATP = L-threonyl-tRNA(Thr) + AMP + diphosphate + H(+). In terms of biological role, catalyzes the attachment of threonine to tRNA(Thr) in a two-step reaction: L-threonine is first activated by ATP to form Thr-AMP and then transferred to the acceptor end of tRNA(Thr). Also edits incorrectly charged L-seryl-tRNA(Thr). This Shewanella sp. (strain W3-18-1) protein is Threonine--tRNA ligase.